A 143-amino-acid chain; its full sequence is Transcriptional regulator SlyA (143 aa).

An HTH marR-type domain is found at 2–135 (ESTLGSDLAR…LSTLVQKLEQ (134 aa)). The H-T-H motif DNA-binding region spans 49-72 (QIQLAKAIGIEQPSLVRTLDQLEE).

The protein belongs to the SlyA family. As to quaternary structure, homodimer.

In terms of biological role, transcription regulator that can specifically activate or repress expression of target genes. Regulates the cpm operon, which contains cpmA, cpmB, cpmC, cpmD, cpmE, cpmF, cpmG and cpmH, involved in carbapenem-like antibiotic production. The polypeptide is Transcriptional regulator SlyA (Photorhabdus laumondii subsp. laumondii (strain DSM 15139 / CIP 105565 / TT01) (Photorhabdus luminescens subsp. laumondii)).